We begin with the raw amino-acid sequence, 415 residues long: Serine hydroxymethyltransferase (415 aa).

Residues Leu117 and Gly121–Leu123 contribute to the (6S)-5,6,7,8-tetrahydrofolate site. N6-(pyridoxal phosphate)lysine is present on Lys226.

This sequence belongs to the SHMT family. In terms of assembly, homodimer. Pyridoxal 5'-phosphate serves as cofactor.

It is found in the cytoplasm. The enzyme catalyses (6R)-5,10-methylene-5,6,7,8-tetrahydrofolate + glycine + H2O = (6S)-5,6,7,8-tetrahydrofolate + L-serine. Its pathway is one-carbon metabolism; tetrahydrofolate interconversion. It participates in amino-acid biosynthesis; glycine biosynthesis; glycine from L-serine: step 1/1. Functionally, catalyzes the reversible interconversion of serine and glycine with tetrahydrofolate (THF) serving as the one-carbon carrier. This reaction serves as the major source of one-carbon groups required for the biosynthesis of purines, thymidylate, methionine, and other important biomolecules. Also exhibits THF-independent aldolase activity toward beta-hydroxyamino acids, producing glycine and aldehydes, via a retro-aldol mechanism. This Dehalococcoides mccartyi (strain ATCC BAA-2100 / JCM 16839 / KCTC 5957 / BAV1) protein is Serine hydroxymethyltransferase.